The primary structure comprises 117 residues: Regulator of ribonuclease activity B (117 aa).

This sequence belongs to the RraB family. As to quaternary structure, interacts with the C-terminal region of Rne.

The protein resides in the cytoplasm. In terms of biological role, globally modulates RNA abundance by binding to RNase E (Rne) and regulating its endonucleolytic activity. Can modulate Rne action in a substrate-dependent manner by altering the composition of the degradosome. This is Regulator of ribonuclease activity B from Pseudoalteromonas atlantica (strain T6c / ATCC BAA-1087).